The sequence spans 610 residues: Elongation factor 4 (610 aa).

In terms of domain architecture, tr-type G spans 11–193 (EKIRNFSIIA…QIVEKVPAPT (183 aa)). Residues 23–28 (DHGKST) and 140–143 (NKID) each bind GTP.

This sequence belongs to the TRAFAC class translation factor GTPase superfamily. Classic translation factor GTPase family. LepA subfamily.

The protein resides in the cell membrane. It carries out the reaction GTP + H2O = GDP + phosphate + H(+). Its function is as follows. Required for accurate and efficient protein synthesis under certain stress conditions. May act as a fidelity factor of the translation reaction, by catalyzing a one-codon backward translocation of tRNAs on improperly translocated ribosomes. Back-translocation proceeds from a post-translocation (POST) complex to a pre-translocation (PRE) complex, thus giving elongation factor G a second chance to translocate the tRNAs correctly. Binds to ribosomes in a GTP-dependent manner. In Streptococcus pyogenes serotype M3 (strain ATCC BAA-595 / MGAS315), this protein is Elongation factor 4.